A 148-amino-acid polypeptide reads, in one-letter code: Nodulation protein NolJ (148 aa).

Residues 66–78 (ADEAMEETEEDAD) are compositionally biased toward acidic residues. Disordered regions lie at residues 66-93 (ADEA…VSDG) and 124-148 (AAKG…RGYG). The segment covering 124 to 136 (AAKGAGAAVPGPN) has biased composition (low complexity).

Involved in efficiency of soybean nodulation and in nodulation delay. The chain is Nodulation protein NolJ (nolJ) from Rhizobium fredii (Sinorhizobium fredii).